The chain runs to 204 residues: Leucyl/phenylalanyl-tRNA--protein transferase (204 aa).

This sequence belongs to the L/F-transferase family.

Its subcellular location is the cytoplasm. The catalysed reaction is N-terminal L-lysyl-[protein] + L-leucyl-tRNA(Leu) = N-terminal L-leucyl-L-lysyl-[protein] + tRNA(Leu) + H(+). It catalyses the reaction N-terminal L-arginyl-[protein] + L-leucyl-tRNA(Leu) = N-terminal L-leucyl-L-arginyl-[protein] + tRNA(Leu) + H(+). It carries out the reaction L-phenylalanyl-tRNA(Phe) + an N-terminal L-alpha-aminoacyl-[protein] = an N-terminal L-phenylalanyl-L-alpha-aminoacyl-[protein] + tRNA(Phe). Functions in the N-end rule pathway of protein degradation where it conjugates Leu, Phe and, less efficiently, Met from aminoacyl-tRNAs to the N-termini of proteins containing an N-terminal arginine or lysine. The protein is Leucyl/phenylalanyl-tRNA--protein transferase of Brucella melitensis biotype 2 (strain ATCC 23457).